The primary structure comprises 203 residues: Nucleoside triphosphate pyrophosphatase (203 aa).

Asp78 acts as the Proton acceptor in catalysis.

The protein belongs to the Maf family. A divalent metal cation is required as a cofactor.

Its subcellular location is the cytoplasm. The enzyme catalyses a ribonucleoside 5'-triphosphate + H2O = a ribonucleoside 5'-phosphate + diphosphate + H(+). It catalyses the reaction a 2'-deoxyribonucleoside 5'-triphosphate + H2O = a 2'-deoxyribonucleoside 5'-phosphate + diphosphate + H(+). In terms of biological role, nucleoside triphosphate pyrophosphatase. May have a dual role in cell division arrest and in preventing the incorporation of modified nucleotides into cellular nucleic acids. The polypeptide is Nucleoside triphosphate pyrophosphatase (Prochlorococcus marinus (strain AS9601)).